A 158-amino-acid polypeptide reads, in one-letter code: MSTVITILNGPNLNFLGKREPEVYGTETLEYIEKSCQDYAKKLEFMVQCHQTNCEGQLVEWIQEAIGMSAGLIINPAAYGHTSIAIFDALKMFSGPIVEVHLSNIHRREAFRHHSYVSASADAVIVGCGHEGYLFALEYIAKQLRYGYKKRSNQTLLT.

Catalysis depends on Tyr-24, which acts as the Proton acceptor. Residues Asn-75, His-81, and Asp-88 each coordinate substrate. His-101 serves as the catalytic Proton donor. Substrate contacts are provided by residues 102 to 103 (LS) and Arg-112.

This sequence belongs to the type-II 3-dehydroquinase family. As to quaternary structure, homododecamer.

It catalyses the reaction 3-dehydroquinate = 3-dehydroshikimate + H2O. It functions in the pathway metabolic intermediate biosynthesis; chorismate biosynthesis; chorismate from D-erythrose 4-phosphate and phosphoenolpyruvate: step 3/7. Functionally, catalyzes a trans-dehydration via an enolate intermediate. The sequence is that of 3-dehydroquinate dehydratase from Bartonella bacilliformis (strain ATCC 35685 / KC583 / Herrer 020/F12,63).